The primary structure comprises 362 residues: UDP-3-O-acylglucosamine N-acyltransferase (362 aa).

Residue H251 is the Proton acceptor of the active site.

This sequence belongs to the transferase hexapeptide repeat family. LpxD subfamily. As to quaternary structure, homotrimer.

The catalysed reaction is a UDP-3-O-[(3R)-3-hydroxyacyl]-alpha-D-glucosamine + a (3R)-hydroxyacyl-[ACP] = a UDP-2-N,3-O-bis[(3R)-3-hydroxyacyl]-alpha-D-glucosamine + holo-[ACP] + H(+). It functions in the pathway bacterial outer membrane biogenesis; LPS lipid A biosynthesis. In terms of biological role, catalyzes the N-acylation of UDP-3-O-acylglucosamine using 3-hydroxyacyl-ACP as the acyl donor. Is involved in the biosynthesis of lipid A, a phosphorylated glycolipid that anchors the lipopolysaccharide to the outer membrane of the cell. The polypeptide is UDP-3-O-acylglucosamine N-acyltransferase (Cupriavidus pinatubonensis (strain JMP 134 / LMG 1197) (Cupriavidus necator (strain JMP 134))).